The primary structure comprises 303 residues: Vesicle-trafficking protein SEC22c (303 aa).

Residues 1–183 (MSMILFASIV…EPAPNLRMKP (183 aa)) are Cytoplasmic-facing. Positions 8–119 (SIVRVRDGLP…YAFLEFDSVI (112 aa)) constitute a Longin domain. The helical transmembrane segment at 184–204 (VTALGVLSLVLNIMCAALNLI) threads the bilayer. The Lumenal segment spans residues 205-223 (RGVHLAEHSLQVAQEEVGN). Residues 224 to 244 (ILAFFIPSVACIVQCYLYLFY) traverse the membrane as a helical segment. Topologically, residues 245-248 (SPAR) are cytoplasmic. A helical membrane pass occupies residues 249 to 269 (TLKVLLMLASICLGNAYLHGL). Position 270 (arginine 270) is a topological domain, lumenal. Residues 271 to 291 (NTWQILFHVGVAFLSSYQILT) form a helical membrane-spanning segment. At 292 to 303 (RQLQERQSDYGV) the chain is on the cytoplasmic side.

This sequence belongs to the synaptobrevin family.

It is found in the endoplasmic reticulum membrane. Its function is as follows. May be involved in vesicle transport between the ER and the Golgi complex. The sequence is that of Vesicle-trafficking protein SEC22c (Sec22c) from Mus musculus (Mouse).